The chain runs to 391 residues: Calcium-binding and spermatid-specific protein 1 (391 aa).

Disordered regions lie at residues 1–23, 90–110, and 152–221; these read MAED…TPTE, PEKE…GSIT, and KEVV…KEVT. Positions 90 to 101 are enriched in low complexity; it reads PEKEITTPTETP. A phosphoserine mark is found at S253 and S269. The tract at residues 271-299 is disordered; it reads EKAKDNVEDPLNDEESTDGANDWMEKETA. Acidic residues predominate over residues 278-287; sequence EDPLNDEEST. Phosphoserine is present on residues S314, S347, S357, S372, and S376. Residues 330–351 form a disordered region; it reads EESHVNTTDLPENETTESVTNV.

In terms of tissue distribution, detected only in testis. Expressed from stages X to VIII of the seminiferous epithelial cycle. Expressed from step 13 to step 16 of spermatid development (at protein level).

It is found in the cytoplasm. The protein localises to the mitochondrion inner membrane. It localises to the cell projection. Its subcellular location is the cilium. The protein resides in the flagellum. It is found in the cytoplasmic vesicle. The protein localises to the secretory vesicle. It localises to the acrosome. Calcium-binding protein. Essential for maintaining the structural integrity of the sperm flagella. This is Calcium-binding and spermatid-specific protein 1 (Cabs1) from Mus musculus (Mouse).